The following is a 616-amino-acid chain: Chaperone protein HscA homolog (616 aa).

This sequence belongs to the heat shock protein 70 family.

Functionally, chaperone involved in the maturation of iron-sulfur cluster-containing proteins. Has a low intrinsic ATPase activity which is markedly stimulated by HscB. The protein is Chaperone protein HscA homolog of Aliivibrio fischeri (strain MJ11) (Vibrio fischeri).